Consider the following 259-residue polypeptide: Methyltransferase sdnD (259 aa).

The protein belongs to the FkbM methyltransferase family.

It participates in antibiotic biosynthesis. In terms of biological role, methyltransferase; part of the gene cluster that mediates the biosynthesis of sordarin and hypoxysordarin, glycoside antibiotics with a unique tetracyclic diterpene aglycone structure. First, the geranylgeranyl diphosphate synthase sdnC constructs GGDP from farnesyl diphosphate and isopentenyl diphosphate. The diterpene cyclase sdnA then catalyzes the cyclization of GGDP to afford cycloaraneosene. Cycloaraneosene is then hydroxylated four times by the putative cytochrome P450 monooxygenases sdnB, sdnE, sdnF and sdnH to give a hydroxylated cycloaraneosene derivative such as cycloaraneosene-8,9,13,19-tetraol. Although the order of the hydroxylations is unclear, at least C8, C9 and C13 of the cycloaraneosene skeleton are hydroxylated before the sordaricin formation. Dehydration of the 13-hydroxy group of the hydroxylated cycloaraneosene derivative might be catalyzed by an unassigned hypothetical protein such as sdnG and sdnP to construct the cyclopentadiene moiety. The FAD-dependent oxidoreductase sdnN is proposed to catalyze the oxidation at C9 of the hydroxylated cycloaraneosene derivative and also catalyze the Baeyer-Villiger oxidation to give the lactone intermediate. The presumed lactone intermediate would be hydrolyzed to give an acrolein moiety and a carboxylate moiety. Then, [4+2]cycloaddition would occur between the acrolein moiety and the cyclopentadiene moiety to give sordaricin. SdnN might also be involved in the [4+2]cycloaddition after the hypothesized oxidation to accommodate the oxidized product and prompt the [4+2]cycloaddition. GDP-6-deoxy-D-altrose may be biosynthesized from GDP-D-mannose by the putative GDP-mannose-4,6-dehydratase sdnI and the short-chain dehydrogenase sdnK. The glycosyltransferase sdnJ catalyzes the attachment of 6-deoxy-D-altrose onto the 19-hydroxy group of sordaricin to give 4'-O-demethylsordarin. The methyltransferase sdnD would complete the biosynthesis of sordarin. Sordarin can be further modified into hypoxysordarin. The unique acyl chain at the 3'-hydroxy group of hypoxysordarin would be constructed by an iterative type I PKS sdnO and the trans-acting polyketide methyltransferase sdnL. SdnL would be responsible for the introduction of an alpha-methyl group of the polyketide chain. Alternatively, the beta-lactamase-like protein sdnR might be responsible for the cleavage and transfer of the polyketide chain from the PKS sdnO to sordarin. Two putative cytochrome P450 monooxygenases, sdnQ and sdnT, might catalyze the epoxidations of the polyketide chain to complete the biosynthesis of hypoxysordarin. Transcriptional regulators sdnM and sdnS are presumably encoded for the transcriptional regulation of the expression of the sdn gene cluster. The polypeptide is Methyltransferase sdnD (Sordaria araneosa (Pleurage araneosa)).